Consider the following 243-residue polypeptide: Octanoyltransferase (243 aa).

The region spanning 49–227 (PLAPQAVWLL…SLSDRFGLVW (179 aa)) is the BPL/LPL catalytic domain. Substrate-binding positions include 91 to 98 (RGGEVTHH), 158 to 160 (AIG), and 171 to 173 (GLA). The Acyl-thioester intermediate role is filled by Cys-189.

This sequence belongs to the LipB family.

It is found in the cytoplasm. It catalyses the reaction octanoyl-[ACP] + L-lysyl-[protein] = N(6)-octanoyl-L-lysyl-[protein] + holo-[ACP] + H(+). It functions in the pathway protein modification; protein lipoylation via endogenous pathway; protein N(6)-(lipoyl)lysine from octanoyl-[acyl-carrier-protein]: step 1/2. Catalyzes the transfer of endogenously produced octanoic acid from octanoyl-acyl-carrier-protein onto the lipoyl domains of lipoate-dependent enzymes. Lipoyl-ACP can also act as a substrate although octanoyl-ACP is likely to be the physiological substrate. This chain is Octanoyltransferase, found in Prochlorococcus marinus (strain MIT 9313).